The sequence spans 502 residues: Maturase K (502 aa).

It belongs to the intron maturase 2 family. MatK subfamily.

The protein localises to the plastid. It is found in the chloroplast. Its function is as follows. Usually encoded in the trnK tRNA gene intron. Probably assists in splicing its own and other chloroplast group II introns. This chain is Maturase K, found in Arabis blepharophylla (Coast rock-cress).